The following is a 632-amino-acid chain: Chaperone protein HtpG (632 aa).

Residues 1-339 (MTQQTMSFQA…SSDLPLNVSR (339 aa)) form an a; substrate-binding region. Residues 340–559 (EILQESRDVK…DNDMSGYLQR (220 aa)) form a b region. Residues 560–632 (MLKAAGQSAP…TNALLLSRAA (73 aa)) form a c region.

The protein belongs to the heat shock protein 90 family. Homodimer.

The protein resides in the cytoplasm. Functionally, molecular chaperone. Has ATPase activity. The chain is Chaperone protein HtpG from Burkholderia pseudomallei (strain 1106a).